The following is a 130-amino-acid chain: Holo-[acyl-carrier-protein] synthase (130 aa).

2 residues coordinate Mg(2+): Asp9 and Glu58.

Belongs to the P-Pant transferase superfamily. AcpS family. It depends on Mg(2+) as a cofactor.

It localises to the cytoplasm. The enzyme catalyses apo-[ACP] + CoA = holo-[ACP] + adenosine 3',5'-bisphosphate + H(+). Functionally, transfers the 4'-phosphopantetheine moiety from coenzyme A to a Ser of acyl-carrier-protein. The sequence is that of Holo-[acyl-carrier-protein] synthase from Mycolicibacterium smegmatis (strain ATCC 700084 / mc(2)155) (Mycobacterium smegmatis).